The chain runs to 387 residues: Succinate--CoA ligase [ADP-forming] subunit beta (387 aa).

Positions 9–236 (KELFAKHNVP…RDATDPLELK (228 aa)) constitute an ATP-grasp domain. ATP-binding positions include lysine 45, 52–54 (GRG), serine 94, and glutamate 99. Residues asparagine 191 and aspartate 205 each contribute to the Mg(2+) site. Substrate is bound by residues asparagine 256 and 318-320 (GIT).

This sequence belongs to the succinate/malate CoA ligase beta subunit family. As to quaternary structure, heterotetramer of two alpha and two beta subunits. Mg(2+) is required as a cofactor.

It catalyses the reaction succinate + ATP + CoA = succinyl-CoA + ADP + phosphate. It carries out the reaction GTP + succinate + CoA = succinyl-CoA + GDP + phosphate. Its pathway is carbohydrate metabolism; tricarboxylic acid cycle; succinate from succinyl-CoA (ligase route): step 1/1. Functionally, succinyl-CoA synthetase functions in the citric acid cycle (TCA), coupling the hydrolysis of succinyl-CoA to the synthesis of either ATP or GTP and thus represents the only step of substrate-level phosphorylation in the TCA. The beta subunit provides nucleotide specificity of the enzyme and binds the substrate succinate, while the binding sites for coenzyme A and phosphate are found in the alpha subunit. The chain is Succinate--CoA ligase [ADP-forming] subunit beta from Mycobacterium sp. (strain JLS).